The primary structure comprises 68 residues: Conotoxin Cal14.13a (68 aa).

The signal sequence occupies residues 1–21 (MKLCVVIVLLMLAMPFNGGEA). Positions 22 to 38 (SRFFNQHARSQRSGMKT) are excised as a propeptide. The residue at position 66 (Val66) is a Valine amide.

In terms of processing, contains 2 disulfide bonds. As to expression, expressed by the venom duct.

The protein localises to the secreted. Probable neurotoxin with unknown target. Possibly targets ion channels. In Californiconus californicus (California cone), this protein is Conotoxin Cal14.13a.